The sequence spans 344 residues: Phosphate acyltransferase (344 aa).

Belongs to the PlsX family. In terms of assembly, homodimer. Probably interacts with PlsY.

It is found in the cytoplasm. It catalyses the reaction a fatty acyl-[ACP] + phosphate = an acyl phosphate + holo-[ACP]. Its pathway is lipid metabolism; phospholipid metabolism. Functionally, catalyzes the reversible formation of acyl-phosphate (acyl-PO(4)) from acyl-[acyl-carrier-protein] (acyl-ACP). This enzyme utilizes acyl-ACP as fatty acyl donor, but not acyl-CoA. The sequence is that of Phosphate acyltransferase from Yersinia enterocolitica serotype O:8 / biotype 1B (strain NCTC 13174 / 8081).